The chain runs to 152 residues: D-aminoacyl-tRNA deacylase (152 aa).

The short motif at 142–143 (GP) is the Gly-cisPro motif, important for rejection of L-amino acids element.

Belongs to the DTD family. Homodimer.

The protein resides in the cytoplasm. The enzyme catalyses glycyl-tRNA(Ala) + H2O = tRNA(Ala) + glycine + H(+). The catalysed reaction is a D-aminoacyl-tRNA + H2O = a tRNA + a D-alpha-amino acid + H(+). Functionally, an aminoacyl-tRNA editing enzyme that deacylates mischarged D-aminoacyl-tRNAs. Also deacylates mischarged glycyl-tRNA(Ala), protecting cells against glycine mischarging by AlaRS. Acts via tRNA-based rather than protein-based catalysis; rejects L-amino acids rather than detecting D-amino acids in the active site. By recycling D-aminoacyl-tRNA to D-amino acids and free tRNA molecules, this enzyme counteracts the toxicity associated with the formation of D-aminoacyl-tRNA entities in vivo and helps enforce protein L-homochirality. This chain is D-aminoacyl-tRNA deacylase, found in Burkholderia lata (strain ATCC 17760 / DSM 23089 / LMG 22485 / NCIMB 9086 / R18194 / 383).